The sequence spans 98 residues: Keratin-associated protein 3-3 (98 aa).

3 repeat units span residues 3-7 (CCASR), 47-51 (CCDNC), and 89-93 (CCEPC). The 3 X 5 AA repeats of C-C-X(3) stretch occupies residues 3–59 (CCASRGCSVPTGPATTICSSDKSCRCGVCLPSTCPHTVWLLEPTCCDNCPPPCHIPQ).

The protein belongs to the KRTAP type 3 family. As to quaternary structure, interacts with hair keratins. Localized to the upper cortex of the hair shaft.

Its function is as follows. In the hair cortex, hair keratin intermediate filaments are embedded in an interfilamentous matrix, consisting of hair keratin-associated proteins (KRTAP), which are essential for the formation of a rigid and resistant hair shaft through their extensive disulfide bond cross-linking with abundant cysteine residues of hair keratins. The matrix proteins include the high-sulfur and high-glycine-tyrosine keratins. The polypeptide is Keratin-associated protein 3-3 (KRTAP3-3) (Homo sapiens (Human)).